The following is a 369-amino-acid chain: UDP-3-O-acylglucosamine N-acyltransferase (369 aa).

His263 serves as the catalytic Proton acceptor.

This sequence belongs to the transferase hexapeptide repeat family. LpxD subfamily. Homotrimer.

It carries out the reaction a UDP-3-O-[(3R)-3-hydroxyacyl]-alpha-D-glucosamine + a (3R)-hydroxyacyl-[ACP] = a UDP-2-N,3-O-bis[(3R)-3-hydroxyacyl]-alpha-D-glucosamine + holo-[ACP] + H(+). It functions in the pathway bacterial outer membrane biogenesis; LPS lipid A biosynthesis. Its function is as follows. Catalyzes the N-acylation of UDP-3-O-acylglucosamine using 3-hydroxyacyl-ACP as the acyl donor. Is involved in the biosynthesis of lipid A, a phosphorylated glycolipid that anchors the lipopolysaccharide to the outer membrane of the cell. The sequence is that of UDP-3-O-acylglucosamine N-acyltransferase from Burkholderia vietnamiensis (strain G4 / LMG 22486) (Burkholderia cepacia (strain R1808)).